Consider the following 589-residue polypeptide: Protein PAF1 homolog (589 aa).

Pro residues predominate over residues Met1–His54. Disordered stretches follow at residues Met1–Thr180 and Gly542–Glu589. Residues Ala55 to Gln65 show a composition bias toward low complexity. Residues Ala71–Asp87 show a composition bias toward pro residues. Basic and acidic residues predominate over residues Pro88 to Ser116. Residues Lys117–Ser127 show a composition bias toward basic residues. Residues His126–Asn159 are a coiled coil. A compositionally biased stretch (basic and acidic residues) spans Lys128 to Arg154.

This sequence belongs to the PAF1 family. As to quaternary structure, component of the nuclear PAF1 complex (PAF1C), which consists of VIP2/ELF7/PAF1, VIP3/SKI8/WDR61, VIP4/LEO1, VIP5/RTF1, VIP6/ELF8/CTR9 and CDC73. Expressed in roots, leaves and shoot apex.

It is found in the nucleus. Functionally, component of the PAF1 complex (PAF1C) which is involved in histone modifications such as methylation on histone H3 'Lys-4' (H3K4me3). Involved in regulation of flowering time. Required for the expression of the flowering repressors and MAD-box genes FLC, AGL27/FLM and AGL31/MAF2. Required for histone H3 trimethylation on 'Lys-4' H3K4me3 at the FLC and AGL27/FLM loci. Involved in the control of seed dormancy and germination. The protein is Protein PAF1 homolog of Arabidopsis thaliana (Mouse-ear cress).